The primary structure comprises 65 residues: Large ribosomal subunit protein bL35 (65 aa).

This sequence belongs to the bacterial ribosomal protein bL35 family.

This is Large ribosomal subunit protein bL35 from Sorangium cellulosum (strain So ce56) (Polyangium cellulosum (strain So ce56)).